The chain runs to 452 residues: Isocitrate dehydrogenase [NADP], mitochondrial (452 aa).

The N-terminal 39 residues, 1-39 (MAGYLRVVRSLCRASGSGSAWAPAALTAPNLQEQPRRHY), are a transit peptide targeting the mitochondrion. N6-acetyllysine is present on residues K45, K48, K67, and K69. N6-acetyllysine; alternate is present on residues K80 and K106. Residues K80 and K106 each carry the N6-succinyllysine; alternate modification. Residues 115 to 117 (TIT) and R122 contribute to the NADP(+) site. T117 contributes to the D-threo-isocitrate binding site. Residues 134-140 (SPNGTIR) and R149 contribute to the D-threo-isocitrate site. K155 bears the N6-acetyllysine mark. K166 is subject to N6-acetyllysine; alternate. K166 carries the N6-succinyllysine; alternate modification. R172 lines the D-threo-isocitrate pocket. Residues K180 and K193 each carry the N6-acetyllysine; alternate modification. K180 and K193 each carry N6-succinyllysine; alternate. The residue at position 199 (K199) is an N6-acetyllysine. N6-acetyllysine; alternate is present on K256. At K256 the chain carries N6-succinyllysine; alternate. K263, K272, K275, and K280 each carry N6-acetyllysine. K282 is subject to N6-acetyllysine; alternate. At K282 the chain carries N6-succinyllysine; alternate. D291 lines the Mn(2+) pocket. Position 299 (K299) interacts with NADP(+). D314 is a Mn(2+) binding site. NADP(+) contacts are provided by residues 349-354 (GTVTRH) and N367. Position 384 is an N6-acetyllysine; alternate (K384). At K384 the chain carries N6-succinyllysine; alternate. Residues K400, K413, and K442 each carry the N6-acetyllysine modification.

It belongs to the isocitrate and isopropylmalate dehydrogenases family. In terms of assembly, homodimer. Requires Mg(2+) as cofactor. Mn(2+) serves as cofactor. In terms of processing, acetylation at Lys-413 dramatically reduces catalytic activity. Deacetylated by SIRT3.

The protein resides in the mitochondrion. The enzyme catalyses D-threo-isocitrate + NADP(+) = 2-oxoglutarate + CO2 + NADPH. Its function is as follows. Plays a role in intermediary metabolism and energy production. It may tightly associate or interact with the pyruvate dehydrogenase complex. This chain is Isocitrate dehydrogenase [NADP], mitochondrial (IDH2), found in Bos taurus (Bovine).